The sequence spans 468 residues: Uronate isomerase (468 aa).

The protein belongs to the metallo-dependent hydrolases superfamily. Uronate isomerase family.

It carries out the reaction D-glucuronate = D-fructuronate. The enzyme catalyses aldehydo-D-galacturonate = keto-D-tagaturonate. It functions in the pathway carbohydrate metabolism; pentose and glucuronate interconversion. The protein is Uronate isomerase of Lachnospira eligens (strain ATCC 27750 / DSM 3376 / VPI C15-48 / C15-B4) (Eubacterium eligens).